The chain runs to 269 residues: Aminoglycoside N(3)-acetyltransferase III (269 aa).

The protein belongs to the antibiotic N-acetyltransferase family.

It catalyses the reaction a 2-deoxystreptamine antibiotic + acetyl-CoA = an N(3)-acetyl-2-deoxystreptamine antibiotic + CoA + H(+). In terms of biological role, resistance to antibiotics containing the 2-deoxy-streptamine ring including gentamicin, kanamycin, tobramycin, neomycin and apramycin. The chain is Aminoglycoside N(3)-acetyltransferase III (aac3-Vb) from Serratia marcescens.